The primary structure comprises 130 residues: Granulin (130 aa).

A signal peptide spans 1-26 (MNYSKIFIFGIISLILMALFSSTVES). Intrachain disulfides connect Cys67–Cys79 and Cys73–Cys89.

It belongs to the granulin family. Post-translationally, granulins are disulfide bridged.

Its subcellular location is the secreted. This Dictyostelium discoideum (Social amoeba) protein is Granulin (grn).